We begin with the raw amino-acid sequence, 153 residues long: uncharacterized protein (153 aa).

A disordered region spans residues 1–88 (MDKDRPGLPA…VPPPQLDHPG (88 aa)).

This is an uncharacterized protein from Epstein-Barr virus (strain P3HR-1) (HHV-4).